The chain runs to 734 residues: Subtilisin-like protease SBT3.2 (734 aa).

Residues Met-1–Ala-19 form the signal peptide. The propeptide at Ala-20–Gln-88 is activation peptide. A Peptidase S8 domain is found at Thr-92–Ala-581. Residue Asn-108 is glycosylated (N-linked (GlcNAc...) asparagine). Asp-122 acts as the Charge relay system in catalysis. An N-linked (GlcNAc...) asparagine glycan is attached at Asn-143. His-179 serves as the catalytic Charge relay system. Asn-326 and Asn-355 each carry an N-linked (GlcNAc...) asparagine glycan. The PA domain occupies Val-361 to Ile-438. Asn-497 is a glycosylation site (N-linked (GlcNAc...) asparagine). Ser-512 serves as the catalytic Charge relay system. The N-linked (GlcNAc...) asparagine glycan is linked to Asn-669.

Belongs to the peptidase S8 family.

It is found in the secreted. In Arabidopsis thaliana (Mouse-ear cress), this protein is Subtilisin-like protease SBT3.2.